A 233-amino-acid chain; its full sequence is Zinc metalloproteinase recombinant fibrinogenase II (233 aa).

Residues 19 to 215 (KYVETVFVVD…HNPECIDNEP (197 aa)) form the Peptidase M12B domain. 2 residues coordinate Ca(2+): glutamate 22 and aspartate 106. Disulfide bonds link cysteine 130-cysteine 210, cysteine 170-cysteine 194, and cysteine 172-cysteine 177. Histidine 155 contributes to the Zn(2+) binding site. The active site involves glutamate 156. Zn(2+)-binding residues include histidine 159 and histidine 165. The N-linked (GlcNAc...) asparagine glycan is linked to asparagine 193. The Ca(2+) site is built by cysteine 210, asparagine 213, asparagine 228, leucine 230, and glutamate 232.

It belongs to the venom metalloproteinase (M12B) family. P-III subfamily. Requires Zn(2+) as cofactor. As to expression, expressed by the venom gland.

The protein localises to the secreted. Inhibited by PMSF and EDTA. Slightly inhibited by Cu(2+) and Zn(2+). Not inhibited by aprotinin, SBTI, Ca(2+), Mg(2+), Na(+) and K(+). In terms of biological role, snake venom zinc metalloprotease that acts at several levels. It has direct fibrino(geno)lytic activity (Aalpha chain of fibrinogen is cleaved quickly, Bbeta chain slowly, and gamma chain even more slowly) and degradation of TNF-alpha. These activities permit to protect against sepsis and disseminated intravascular coagulation. It inhibits ADP-induced platelet aggregation in human platelet-rich plasma (IC(50)=65.4 ug/ml). It decreases the activity of complement by degrading human C5, C6 and C9 in vitro, decreasing serum levels of C1q, C3 and C4 in rat, and inhibiting the MAC deposition on HUVECs membrane. This inhibition of complement protects against hyperacute rejection that is the main barrier in xenotransplantation. Has preference for Lys at the P1 position. Cleaves insulin B chain at '36-Val-|-Glu-37', '39-Leu-|-Tyr-40', and '48-Phe-|-Phe-49' bonds. Also cleaves fibronectin and type IV collagen. The protein is Zinc metalloproteinase recombinant fibrinogenase II of Deinagkistrodon acutus (Hundred-pace snake).